Reading from the N-terminus, the 530-residue chain is Histone-arginine methyltransferase CARMER (530 aa).

An SAM-dependent MTase PRMT-type domain is found at 141–450; sequence ASQYFQFYGY…QSYDVTIDLH (310 aa). 6 residues coordinate S-adenosyl-L-methionine: Q154, R163, G187, E209, E238, and T266. R501 carries the post-translational modification Asymmetric dimethylarginine; by autocatalysis.

The protein belongs to the class I-like SAM-binding methyltransferase superfamily. Protein arginine N-methyltransferase family. As to quaternary structure, homodimer. In terms of processing, the dimethylated protein is the major form.

Its subcellular location is the cytoplasm. It localises to the nucleus. It catalyses the reaction L-arginyl-[protein] + 2 S-adenosyl-L-methionine = N(omega),N(omega)-dimethyl-L-arginyl-[protein] + 2 S-adenosyl-L-homocysteine + 2 H(+). In terms of biological role, methylates (mono- and asymmetric dimethylation) the guanidino nitrogens of arginyl residues in proteins. May methylate histone H3 at 'Arg-17' and activate transcription via chromatin remodeling. This chain is Histone-arginine methyltransferase CARMER (Art4), found in Drosophila simulans (Fruit fly).